The following is a 256-amino-acid chain: Pimeloyl-[acyl-carrier protein] methyl ester esterase (256 aa).

One can recognise an AB hydrolase-1 domain in the interval 15–242 (HLVLLHGWGL…AAHAPFISHP (228 aa)). Substrate-binding positions include Trp-22, 82–83 (SL), and 143–147 (FLALQ). Ser-82 functions as the Nucleophile in the catalytic mechanism. Active-site residues include Asp-207 and His-235. His-235 contributes to the substrate binding site.

Belongs to the AB hydrolase superfamily. Carboxylesterase BioH family. As to quaternary structure, monomer.

Its subcellular location is the cytoplasm. It carries out the reaction 6-carboxyhexanoyl-[ACP] methyl ester + H2O = 6-carboxyhexanoyl-[ACP] + methanol + H(+). Its pathway is cofactor biosynthesis; biotin biosynthesis. In terms of biological role, the physiological role of BioH is to remove the methyl group introduced by BioC when the pimeloyl moiety is complete. It allows to synthesize pimeloyl-ACP via the fatty acid synthetic pathway through the hydrolysis of the ester bonds of pimeloyl-ACP esters. This Shigella dysenteriae serotype 1 (strain Sd197) protein is Pimeloyl-[acyl-carrier protein] methyl ester esterase.